The following is a 249-amino-acid chain: Proteasome subunit alpha type-7 (249 aa).

The protein belongs to the peptidase T1A family. In terms of assembly, the 26S proteasome consists of a 20S proteasome core and two 19S regulatory subunits. The 20S proteasome core is composed of 28 subunits that are arranged in four stacked rings, resulting in a barrel-shaped structure. The two end rings are each formed by seven alpha subunits, and the two central rings are each formed by seven beta subunits. The catalytic chamber with the active sites is on the inside of the barrel.

The protein localises to the cytoplasm. The protein resides in the nucleus. In terms of biological role, the proteasome is a multicatalytic proteinase complex which is characterized by its ability to cleave peptides with Arg, Phe, Tyr, Leu, and Glu adjacent to the leaving group at neutral or slightly basic pH. The proteasome has an ATP-dependent proteolytic activity. The protein is Proteasome subunit alpha type-7 (PAD1) of Cicer arietinum (Chickpea).